The sequence spans 264 residues: MNHRPKKRFGQNFLQDRQVVDGIFAAADLQPEDRVLEIGPGLGALTDRLLPEVARLHVIEIDRDLGAGLQARDEDKLVVHLGDALKLDWTALLTDPPYKLIANLPYNISSQIVFKILDHRHLFSRLVLMFQQEVGERLCAGPGSKNYGILSVLCQVWFDIRRVLRVPPGAFYPPPKVHSAVLCFDALAQPRIVVEDQQFFRRVVKAAFAQRRKTLRNSLTGAGLGFDGLEVSLLDAGIDPGRRAETLSLEEFGKLAQLIQPHFV.

The S-adenosyl-L-methionine site is built by N12, L14, G39, E60, D83, and N103.

The protein belongs to the class I-like SAM-binding methyltransferase superfamily. rRNA adenine N(6)-methyltransferase family. RsmA subfamily.

Its subcellular location is the cytoplasm. It catalyses the reaction adenosine(1518)/adenosine(1519) in 16S rRNA + 4 S-adenosyl-L-methionine = N(6)-dimethyladenosine(1518)/N(6)-dimethyladenosine(1519) in 16S rRNA + 4 S-adenosyl-L-homocysteine + 4 H(+). In terms of biological role, specifically dimethylates two adjacent adenosines (A1518 and A1519) in the loop of a conserved hairpin near the 3'-end of 16S rRNA in the 30S particle. May play a critical role in biogenesis of 30S subunits. In Syntrophotalea carbinolica (strain DSM 2380 / NBRC 103641 / GraBd1) (Pelobacter carbinolicus), this protein is Ribosomal RNA small subunit methyltransferase A.